The chain runs to 290 residues: HTH-type transcriptional regulator BsdA (290 aa).

An HTH lysR-type domain is found at 1–59; sequence MDIRQLRYFITIAQEQKITSAAKKLHMAQPPLSRQLKQLEDELGVVLFDRNKKKQMTLT. Positions 18–37 form a DNA-binding region, H-T-H motif; the sequence is ITSAAKKLHMAQPPLSRQLK.

This sequence belongs to the LysR transcriptional regulatory family.

Could be a positive regulator of bsdBCD expression in response to salicylic acid. In Bacillus subtilis (strain 168), this protein is HTH-type transcriptional regulator BsdA (bsdA).